A 615-amino-acid polypeptide reads, in one-letter code: Dihydroxy-acid dehydratase (615 aa).

Position 81 (Asp-81) interacts with Mg(2+). Cys-122 lines the [2Fe-2S] cluster pocket. Mg(2+) is bound by residues Asp-123 and Lys-124. Lys-124 bears the N6-carboxylysine mark. Residue Cys-197 coordinates [2Fe-2S] cluster. Glu-494 serves as a coordination point for Mg(2+). Ser-520 (proton acceptor) is an active-site residue.

Belongs to the IlvD/Edd family. As to quaternary structure, homodimer. The cofactor is [2Fe-2S] cluster. Mg(2+) is required as a cofactor.

The enzyme catalyses (2R)-2,3-dihydroxy-3-methylbutanoate = 3-methyl-2-oxobutanoate + H2O. The catalysed reaction is (2R,3R)-2,3-dihydroxy-3-methylpentanoate = (S)-3-methyl-2-oxopentanoate + H2O. The protein operates within amino-acid biosynthesis; L-isoleucine biosynthesis; L-isoleucine from 2-oxobutanoate: step 3/4. It functions in the pathway amino-acid biosynthesis; L-valine biosynthesis; L-valine from pyruvate: step 3/4. Its function is as follows. Functions in the biosynthesis of branched-chain amino acids. Catalyzes the dehydration of (2R,3R)-2,3-dihydroxy-3-methylpentanoate (2,3-dihydroxy-3-methylvalerate) into 2-oxo-3-methylpentanoate (2-oxo-3-methylvalerate) and of (2R)-2,3-dihydroxy-3-methylbutanoate (2,3-dihydroxyisovalerate) into 2-oxo-3-methylbutanoate (2-oxoisovalerate), the penultimate precursor to L-isoleucine and L-valine, respectively. The chain is Dihydroxy-acid dehydratase from Salinispora arenicola (strain CNS-205).